A 107-amino-acid chain; its full sequence is Ig kappa chain V-VI region NQ6-8.3.1 (107 aa).

The tract at residues 1 to 23 is framework-1; it reads QIVLTQSPAIMSASPGQKVTMTC. Cysteine 23 and cysteine 87 are disulfide-bonded. The complementarity-determining-1 stretch occupies residues 24–33; that stretch reads SASSSVSYMH. The tract at residues 34–48 is framework-2; sequence WYQQKSGTSPKRWIY. The tract at residues 49–55 is complementarity-determining-2; that stretch reads DTSKLAS. The segment at 56 to 87 is framework-3; that stretch reads GXPARFSGSGSATSYSLTITSMQAEDAATYYC. Residues 88-96 form a complementarity-determining-3 region; sequence QQWSSNPLT. The framework-4 stretch occupies residues 97–106; sequence FGAGTKLELK.

Its function is as follows. Anti-2-phenyl oxazolone (PHOX) Antibody. The polypeptide is Ig kappa chain V-VI region NQ6-8.3.1 (Mus musculus (Mouse)).